Here is a 195-residue protein sequence, read N- to C-terminus: Probable thymidylate kinase (195 aa).

Residue 7–14 (GIDGVGKT) coordinates ATP.

It belongs to the thymidylate kinase family.

The catalysed reaction is dTMP + ATP = dTDP + ADP. This Methanosphaera stadtmanae (strain ATCC 43021 / DSM 3091 / JCM 11832 / MCB-3) protein is Probable thymidylate kinase.